Consider the following 381-residue polypeptide: Glucose-1-phosphate adenylyltransferase (381 aa).

Residues tyrosine 100, glycine 165, glutamate 180–lysine 181, and serine 191 each bind alpha-D-glucose 1-phosphate.

Belongs to the bacterial/plant glucose-1-phosphate adenylyltransferase family. Homotetramer.

It catalyses the reaction alpha-D-glucose 1-phosphate + ATP + H(+) = ADP-alpha-D-glucose + diphosphate. Its pathway is glycan biosynthesis; glycogen biosynthesis. Functionally, involved in the biosynthesis of ADP-glucose, a building block required for the elongation reactions to produce glycogen. Catalyzes the reaction between ATP and alpha-D-glucose 1-phosphate (G1P) to produce pyrophosphate and ADP-Glc. This Mycoplasma mobile (strain ATCC 43663 / 163K / NCTC 11711) (Mesomycoplasma mobile) protein is Glucose-1-phosphate adenylyltransferase.